Here is a 737-residue protein sequence, read N- to C-terminus: ATP-dependent RNA helicase SUV3, mitochondrial (737 aa).

The N-terminal 25 residues, Met-1 to Ala-25, are a transit peptide targeting the mitochondrion. The Helicase ATP-binding domain maps to Glu-226 to Ile-365. Gly-239–Thr-246 is a binding site for ATP. Residues Pro-390–Thr-546 enclose the Helicase C-terminal domain.

Belongs to the helicase family. As to quaternary structure, MSU1 and SUV3 are the two components of the mitochondrial degradosome (mtEXO).

It localises to the mitochondrion matrix. The catalysed reaction is ATP + H2O = ADP + phosphate + H(+). Its function is as follows. Required for intron-independent turnover and processing of mitochondrial RNA. It is a key control element in nuclear-mitochondrial interactions. The polypeptide is ATP-dependent RNA helicase SUV3, mitochondrial (SUV3) (Saccharomyces cerevisiae (strain ATCC 204508 / S288c) (Baker's yeast)).